The chain runs to 921 residues: Retinoblastoma-associated protein (921 aa).

Disordered stretches follow at residues 1-31 (MPPK…PPGG) and 603-634 (RSPK…QKPQ). A compositionally biased stretch (polar residues) spans 612–634 (HPQSGTSNPDAQPSATSQTQKPQ). The Bipartite nuclear localization signal signature appears at 853–869 (KRSAEPSDAPKPLKRLR). Residues 873 to 921 (EGQDEADGGKHLPQESKFQQKLAEMTSTRTRMQKQKLNDGNDTSANEEK) form a disordered region. The segment covering 910 to 921 (NDGNDTSANEEK) has biased composition (polar residues).

Belongs to the retinoblastoma protein (RB) family. Interacts with and sequesters the E2F1 transcription factor, thereby inhibiting E2F1 transcription. Interacts with SUV39H1, KMT5B and KMT5C. As to quaternary structure, (Microbial infection) Interacts with, and is inhibited by fowl adenovirus 1 protein GAM-1. In terms of processing, phosphorylated in G1, thereby releasing E2F1 which is then able to activate cell growth. Dephosphorylated at the late M phase. Phosphorylation of domain C promotes interaction between the C-terminal domain C and the Pocket domain, and thereby inhibits interactions with heterodimeric E2F/DP transcription factor complexes.

Its subcellular location is the nucleus. It is found in the cytoplasm. Tumor suppressor that is a key regulator of the G1/S transition of the cell cycle. The hypophosphorylated form binds transcription regulators of the E2F family, preventing transcription of E2F-responsive genes. Both physically blocks E2Fs transactivating domain and recruits chromatin-modifying enzymes that actively repress transcription. Cyclin and CDK-dependent phosphorylation of RB1 induces its dissociation from E2Fs, thereby activating transcription of E2F responsive genes and triggering entry into S phase. RB1 also promotes the G0-G1 transition upon phosphorylation and activation by CDK3/cyclin-C. The chain is Retinoblastoma-associated protein (RB1) from Gallus gallus (Chicken).